A 473-amino-acid chain; its full sequence is tRNA modification GTPase MnmE (473 aa).

(6S)-5-formyl-5,6,7,8-tetrahydrofolate contacts are provided by arginine 30, glutamate 95, and arginine 134. A TrmE-type G domain is found at 230 to 394 (GVAAVIAGRP…LKSTMAGMVE (165 aa)). GTP contacts are provided by residues 240–245 (NAGKST), 259–265 (SHMPGTT), and 284–287 (DTAG). Mg(2+) contacts are provided by serine 244 and threonine 265. (6S)-5-formyl-5,6,7,8-tetrahydrofolate is bound at residue lysine 473.

This sequence belongs to the TRAFAC class TrmE-Era-EngA-EngB-Septin-like GTPase superfamily. TrmE GTPase family. As to quaternary structure, homodimer. Heterotetramer of two MnmE and two MnmG subunits. Requires K(+) as cofactor.

The protein resides in the cytoplasm. Exhibits a very high intrinsic GTPase hydrolysis rate. Involved in the addition of a carboxymethylaminomethyl (cmnm) group at the wobble position (U34) of certain tRNAs, forming tRNA-cmnm(5)s(2)U34. The polypeptide is tRNA modification GTPase MnmE (Chlorobium phaeovibrioides (strain DSM 265 / 1930) (Prosthecochloris vibrioformis (strain DSM 265))).